The chain runs to 1009 residues: Regulator of telomere elongation helicase 1 homolog (1009 aa).

A Helicase ATP-binding domain is found at 7–322 (AGIPVHFPFE…KEMLLELEKA (316 aa)). 42 to 49 (SPTGTGKT) contacts ATP. Positions 146, 164, 173, and 209 each coordinate [4Fe-4S] cluster. The DEAH box signature appears at 252–255 (DEAH).

It belongs to the helicase family. RAD3/XPD subfamily.

It localises to the nucleus. It carries out the reaction ATP + H2O = ADP + phosphate + H(+). A probable ATP-dependent DNA helicase implicated in DNA repair and the maintenance of genomic stability. Acts as an anti-recombinase to counteract toxic recombination and limit crossover during meiosis. Regulates meiotic recombination and crossover homeostasis by physically dissociating strand invasion events and thereby promotes noncrossover repair by meiotic synthesis dependent strand annealing (SDSA) as well as disassembly of D loop recombination intermediates. This Drosophila persimilis (Fruit fly) protein is Regulator of telomere elongation helicase 1 homolog.